Reading from the N-terminus, the 524-residue chain is Serine/threonine-protein kinase PAK 2 (524 aa).

Residues 1 to 81 are disordered; it reads MSDNGELEDK…PEISPPSDFE (81 aa). S2 is subject to N-acetylserine. S2, S20, S55, and S58 each carry phosphoserine. The residue at position 60 (T60) is a Phosphothreonine. N6-acetyllysine is present on K62. Phosphoserine is present on S64. The span at 67–81 shows a compositional bias: basic and acidic residues; that stretch reads KEKERPEISPPSDFE. The tract at residues 69–112 is GTPase-binding; that stretch reads KERPEISPPSDFEHTIHVGFDAVTGEFTGMPEQWARLLQTSNIT. Residues 69-137 are autoregulatory region; that stretch reads KERPEISPPS…KFYDSNTVKQ (69 aa). Positions 74–87 constitute a CRIB domain; that stretch reads ISPPSDFEHTIHVG. The tract at residues 88–248 is linker; it reads FDAVTGEFTG…IVSIGDPKKK (161 aa). K128 carries the N6-acetyllysine modification. The residue at position 134 (T134) is a Phosphothreonine. Y139 bears the Phosphotyrosine mark. S141 is modified (phosphoserine). Position 143 is a phosphothreonine (T143). S152 carries the phosphoserine modification. Phosphothreonine is present on residues T159 and T169. The segment covering 169–178 has biased composition (acidic residues); the sequence is TEEDDDDEEA. Positions 169–188 are disordered; the sequence is TEEDDDDEEAAPPVIAPRPD. At S197 the chain carries Phosphoserine. The disordered stretch occupies residues 204-228; that stretch reads APVGDSHVDSGAKSSDKQKKKTKMT. Positions 209–228 are enriched in basic and acidic residues; sequence SHVDSGAKSSDKQKKKTKMT. Residues 245–251 carry the Nuclear localization signal motif; the sequence is PKKKYTR. The region spanning 249-500 is the Protein kinase domain; it reads YTRYEKIGQG…AKELLQHPFL (252 aa). Residues 255 to 263 and K278 contribute to the ATP site; that span reads IGQGASGTV. D368 acts as the Proton acceptor in catalysis. T402 bears the Phosphothreonine; by autocatalysis mark.

Interacts tightly with GTP-bound but not GDP-bound CDC42/p21 and RAC1. Interacts with SH3MD4. Interacts with SCRIB. Interacts with ARHGEF7 and GIT1. PAK-2p34 interacts with ARHGAP10. Interacts with RAC1. Post-translationally, full-length PAK2 is autophosphorylated when activated by CDC42/p21. Following cleavage, both peptides, PAK-2p27 and PAK-2p34, become highly autophosphorylated. Autophosphorylation of PAK-2p27 can occur in the absence of any effectors and is dependent on phosphorylation of Thr-402, because PAK-2p27 is acting as an exogenous substrate. In terms of processing, during apoptosis proteolytically cleaved by caspase-3 or caspase-3-like proteases to yield active PAK-2p34. Ubiquitinated, leading to its proteasomal degradation.

The protein localises to the cytoplasm. Its subcellular location is the nucleus. The protein resides in the perinuclear region. It localises to the membrane. It catalyses the reaction L-seryl-[protein] + ATP = O-phospho-L-seryl-[protein] + ADP + H(+). The enzyme catalyses L-threonyl-[protein] + ATP = O-phospho-L-threonyl-[protein] + ADP + H(+). Activated by binding small G proteins. Binding of GTP-bound CDC42 or RAC1 to the autoregulatory region releases monomers from the autoinhibited dimer, enables phosphorylation of Thr-402 and allows the kinase domain to adopt an active structure. Following caspase cleavage, autophosphorylated PAK-2p34 is constitutively active. Functionally, serine/threonine protein kinase that plays a role in a variety of different signaling pathways including cytoskeleton regulation, cell motility, cell cycle progression, apoptosis or proliferation. Acts as a downstream effector of the small GTPases CDC42 and RAC1. Activation by the binding of active CDC42 and RAC1 results in a conformational change and a subsequent autophosphorylation on several serine and/or threonine residues. Full-length PAK2 stimulates cell survival and cell growth. Phosphorylates MAPK4 and MAPK6 and activates the downstream target MAPKAPK5, a regulator of F-actin polymerization and cell migration. Phosphorylates JUN and plays an important role in EGF-induced cell proliferation. Phosphorylates many other substrates including histone H4 to promote assembly of H3.3 and H4 into nucleosomes, BAD, ribosomal protein S6, or MBP. Phosphorylates CASP7, thereby preventing its activity. Additionally, associates with ARHGEF7 and GIT1 to perform kinase-independent functions such as spindle orientation control during mitosis. On the other hand, apoptotic stimuli such as DNA damage lead to caspase-mediated cleavage of PAK2, generating PAK-2p34, an active p34 fragment that translocates to the nucleus and promotes cellular apoptosis involving the JNK signaling pathway. Caspase-activated PAK2 phosphorylates MKNK1 and reduces cellular translation. This chain is Serine/threonine-protein kinase PAK 2 (PAK2), found in Oryctolagus cuniculus (Rabbit).